A 120-amino-acid polypeptide reads, in one-letter code: NAD(P)H-quinone oxidoreductase subunit 3, chloroplastic (120 aa).

The next 3 helical transmembrane spans lie at 2–22 (FLLYEYDIFWAFLIISSVIPI), 64–84 (MFALVFVVFDVETIFLYPWAL), and 88–108 (ILGVSVFIEALIFVLILVLGL).

This sequence belongs to the complex I subunit 3 family. As to quaternary structure, NDH is composed of at least 16 different subunits, 5 of which are encoded in the nucleus.

It localises to the plastid. The protein resides in the chloroplast thylakoid membrane. The enzyme catalyses a plastoquinone + NADH + (n+1) H(+)(in) = a plastoquinol + NAD(+) + n H(+)(out). The catalysed reaction is a plastoquinone + NADPH + (n+1) H(+)(in) = a plastoquinol + NADP(+) + n H(+)(out). Functionally, NDH shuttles electrons from NAD(P)H:plastoquinone, via FMN and iron-sulfur (Fe-S) centers, to quinones in the photosynthetic chain and possibly in a chloroplast respiratory chain. The immediate electron acceptor for the enzyme in this species is believed to be plastoquinone. Couples the redox reaction to proton translocation, and thus conserves the redox energy in a proton gradient. The sequence is that of NAD(P)H-quinone oxidoreductase subunit 3, chloroplastic from Oenothera biennis (German evening primrose).